Consider the following 253-residue polypeptide: 5'-nucleotidase SurE (253 aa).

A divalent metal cation contacts are provided by Asp8, Asp9, Ser39, and Asn91.

Belongs to the SurE nucleotidase family. The cofactor is a divalent metal cation.

Its subcellular location is the cytoplasm. The enzyme catalyses a ribonucleoside 5'-phosphate + H2O = a ribonucleoside + phosphate. Functionally, nucleotidase that shows phosphatase activity on nucleoside 5'-monophosphates. The chain is 5'-nucleotidase SurE from Albidiferax ferrireducens (strain ATCC BAA-621 / DSM 15236 / T118) (Rhodoferax ferrireducens).